The following is a 397-amino-acid chain: GDNF family receptor alpha-3 (397 aa).

Residues 1 to 28 form the signal peptide; sequence MGLSWSPRPPLLMILLLVLSLWLPLGAG. A disulfide bridge links Cys-48 with Cys-54. Residues Asn-92 and Asn-145 are each glycosylated (N-linked (GlcNAc...) asparagine). 10 cysteine pairs are disulfide-bonded: Cys-159/Cys-215, Cys-166/Cys-172, Cys-183/Cys-193, Cys-188/Cys-236, Cys-217/Cys-224, Cys-245/Cys-313, Cys-252/Cys-258, Cys-269/Cys-285, Cys-278/Cys-337, and Cys-315/Cys-325. Asn-306 is a glycosylation site (N-linked (GlcNAc...) asparagine). A lipid anchor (GPI-anchor amidated asparagine) is attached at Asn-371. Positions 372-397 are cleaved as a propeptide — removed in mature form; sequence PALRLQPRLPILSFSILPLILLQTLW.

Belongs to the GDNFR family. Interacts with ARTN ligand and RET: forms a 2:2:2 ternary complex composed of ARTN ligand, GFRA3 and RET receptor. Interacts with SORL1.

It is found in the cell membrane. Receptor for artemin (ARTN), a growth factor that supports the survival of sensory and sympathetic peripheral neurons. ARTN-binding leads to autophosphorylation and activation of the RET receptor. The polypeptide is GDNF family receptor alpha-3 (Gfra3) (Mus musculus (Mouse)).